The primary structure comprises 359 residues: S-adenosylmethionine:tRNA ribosyltransferase-isomerase (359 aa).

It belongs to the QueA family. As to quaternary structure, monomer.

Its subcellular location is the cytoplasm. The enzyme catalyses 7-aminomethyl-7-carbaguanosine(34) in tRNA + S-adenosyl-L-methionine = epoxyqueuosine(34) in tRNA + adenine + L-methionine + 2 H(+). The protein operates within tRNA modification; tRNA-queuosine biosynthesis. In terms of biological role, transfers and isomerizes the ribose moiety from AdoMet to the 7-aminomethyl group of 7-deazaguanine (preQ1-tRNA) to give epoxyqueuosine (oQ-tRNA). This Synechococcus elongatus (strain ATCC 33912 / PCC 7942 / FACHB-805) (Anacystis nidulans R2) protein is S-adenosylmethionine:tRNA ribosyltransferase-isomerase.